The chain runs to 427 residues: Glutamate-1-semialdehyde 2,1-aminomutase (427 aa).

Residue Lys-265 is modified to N6-(pyridoxal phosphate)lysine.

The protein belongs to the class-III pyridoxal-phosphate-dependent aminotransferase family. HemL subfamily. As to quaternary structure, homodimer. The cofactor is pyridoxal 5'-phosphate.

The protein resides in the cytoplasm. The catalysed reaction is (S)-4-amino-5-oxopentanoate = 5-aminolevulinate. Its pathway is porphyrin-containing compound metabolism; protoporphyrin-IX biosynthesis; 5-aminolevulinate from L-glutamyl-tRNA(Glu): step 2/2. This Pseudomonas putida (strain ATCC 700007 / DSM 6899 / JCM 31910 / BCRC 17059 / LMG 24140 / F1) protein is Glutamate-1-semialdehyde 2,1-aminomutase.